A 352-amino-acid chain; its full sequence is [LysW]-L-2-aminoadipate/[LysW]-L-glutamate phosphate reductase (352 aa).

13–16 (SGYT) is a binding site for NADP(+). The active site involves Cys-153. Asn-319 is an NADP(+) binding site.

It belongs to the NAGSA dehydrogenase family. Type 1 subfamily. LysY sub-subfamily.

The protein localises to the cytoplasm. The catalysed reaction is [amino-group carrier protein]-C-terminal-N-(1-carboxy-5-oxopentan-1-yl)-L-glutamine + phosphate + NADP(+) = [amino-group carrier protein]-C-terminal-N-(1-carboxy-5-phosphooxy-5-oxopentan-1-yl)-L-glutamine + NADPH + H(+). It catalyses the reaction [amino-group carrier protein]-C-terminal-gamma-(L-glutamyl-5-semialdehyde)-L-glutamate + phosphate + NADP(+) = [amino-group carrier protein]-C-terminal-gamma-(5-phospho-L-glutamyl)-L-glutamate + NADPH + H(+). The protein operates within amino-acid biosynthesis; L-lysine biosynthesis via AAA pathway; L-lysine from L-alpha-aminoadipate (Thermus route): step 3/5. It participates in amino-acid biosynthesis; L-arginine biosynthesis. In terms of biological role, involved in both the arginine and lysine biosynthetic pathways. The chain is [LysW]-L-2-aminoadipate/[LysW]-L-glutamate phosphate reductase from Saccharolobus solfataricus (strain ATCC 35092 / DSM 1617 / JCM 11322 / P2) (Sulfolobus solfataricus).